The primary structure comprises 209 residues: LexA repressor (209 aa).

The segment at residues 28–48 is a DNA-binding region (H-T-H motif); sequence RAEIAKELGFRSANAAEEHLK. Active-site for autocatalytic cleavage activity residues include S126 and K163.

It belongs to the peptidase S24 family. In terms of assembly, homodimer.

It carries out the reaction Hydrolysis of Ala-|-Gly bond in repressor LexA.. Its function is as follows. Represses a number of genes involved in the response to DNA damage (SOS response), including recA and lexA. In the presence of single-stranded DNA, RecA interacts with LexA causing an autocatalytic cleavage which disrupts the DNA-binding part of LexA, leading to derepression of the SOS regulon and eventually DNA repair. The polypeptide is LexA repressor (Vibrio cholerae serotype O1 (strain ATCC 39541 / Classical Ogawa 395 / O395)).